Consider the following 554-residue polypeptide: Outer envelope protein 61 (554 aa).

The Cytoplasmic segment spans residues Met-1–Lys-525. TPR repeat units follow at residues Ala-103–Ile-136 and Val-180–Asp-213. Disordered stretches follow at residues Thr-245 to Val-269 and Ala-395 to Pro-439. The span at Glu-254 to Asn-263 shows a compositional bias: basic and acidic residues. The span at Ser-412–Ser-423 shows a compositional bias: low complexity. Residues Trp-526–Leu-546 form a helical membrane-spanning segment. At His-547 to Asn-554 the chain is on the lumenal side.

As to quaternary structure, interacts (via TPR region) with HSP70-1, but not with HSP90-2. Interacts with ERDJ2A and ERDJ2B. In the ER membrane, associates with ERDJ2 in membrane complexes of 140 and 200 kDa and specifically interacts with the HSP70 and HSP90 chaperones via its TPR domain. In terms of tissue distribution, ubiquitous. Highest expression in leaves and lowest in roots.

The protein localises to the endoplasmic reticulum membrane. Its subcellular location is the plastid. The protein resides in the chloroplast outer membrane. Plays a role in protein import into the endoplasmic reticulum (ER). May function as chaperone docking protein during post-translational protein translocation into the ER. Chaperone receptor mediating Hsp70-dependent protein targeting to chloroplasts. Interacts specifically with some chloroplast precursors, but not with mitochondrial precursors. Able to select precursors for delivery to the chloroplast translocase independently of Hsp70. This chain is Outer envelope protein 61 (OEP61), found in Arabidopsis thaliana (Mouse-ear cress).